The primary structure comprises 249 residues: Aspartate/glutamate leucyltransferase (249 aa).

The protein belongs to the R-transferase family. Bpt subfamily.

It is found in the cytoplasm. The catalysed reaction is N-terminal L-glutamyl-[protein] + L-leucyl-tRNA(Leu) = N-terminal L-leucyl-L-glutamyl-[protein] + tRNA(Leu) + H(+). It carries out the reaction N-terminal L-aspartyl-[protein] + L-leucyl-tRNA(Leu) = N-terminal L-leucyl-L-aspartyl-[protein] + tRNA(Leu) + H(+). Its function is as follows. Functions in the N-end rule pathway of protein degradation where it conjugates Leu from its aminoacyl-tRNA to the N-termini of proteins containing an N-terminal aspartate or glutamate. This is Aspartate/glutamate leucyltransferase from Brucella suis (strain ATCC 23445 / NCTC 10510).